The primary structure comprises 726 residues: PWWP domain-containing protein 2 (726 aa).

Residues methionine 1–serine 10 are compositionally biased toward basic and acidic residues. The disordered stretch occupies residues methionine 1–methionine 26. Polar residues predominate over residues serine 12–methionine 26. The 62-residue stretch at aspartate 199–histidine 260 folds into the PWWP domain. A disordered region spans residues alanine 392–aspartate 441. The span at asparagine 426–valine 435 shows a compositional bias: polar residues. 2 short sequence motifs (nuclear localization signal) span residues lysine 460 to alanine 467 and lysine 495 to serine 502. Disordered stretches follow at residues glutamate 472–alanine 545 and threonine 568–glutamate 726. Positions glutamate 494–lysine 512 are enriched in basic residues. Over residues serine 606–histidine 634 the composition is skewed to polar residues. Residues leucine 658–isoleucine 688 are compositionally biased toward basic and acidic residues.

It belongs to the PDP family. In terms of assembly, interacts with DEK3. Binds to MSI4/FVE and MSI5. Component of the PRC2 (polycomb repressive complex 2) complex which regulates histone methylation on histone H3K27.

It is found in the nucleus. Together with PDP1, PDP3 and PDP6, interacts with MSI4/FVE and MSI5 to suppress FLC, MAF4 and MAF5 expression by regulating the function of the PRC2 complex and modulating H3K27me3 level, thereby promoting flowering. In Arabidopsis thaliana (Mouse-ear cress), this protein is PWWP domain-containing protein 2.